Here is a 235-residue protein sequence, read N- to C-terminus: Enolase-phosphatase E1 (235 aa).

The protein belongs to the HAD-like hydrolase superfamily. MasA/MtnC family. As to quaternary structure, monomer. Requires Mg(2+) as cofactor.

The enzyme catalyses 5-methylsulfanyl-2,3-dioxopentyl phosphate + H2O = 1,2-dihydroxy-5-(methylsulfanyl)pent-1-en-3-one + phosphate. It functions in the pathway amino-acid biosynthesis; L-methionine biosynthesis via salvage pathway; L-methionine from S-methyl-5-thio-alpha-D-ribose 1-phosphate: step 3/6. Its pathway is amino-acid biosynthesis; L-methionine biosynthesis via salvage pathway; L-methionine from S-methyl-5-thio-alpha-D-ribose 1-phosphate: step 4/6. Functionally, bifunctional enzyme that catalyzes the enolization of 2,3-diketo-5-methylthiopentyl-1-phosphate (DK-MTP-1-P) into the intermediate 2-hydroxy-3-keto-5-methylthiopentenyl-1-phosphate (HK-MTPenyl-1-P), which is then dephosphorylated to form the acireductone 1,2-dihydroxy-3-keto-5-methylthiopentene (DHK-MTPene). This Parvibaculum lavamentivorans (strain DS-1 / DSM 13023 / NCIMB 13966) protein is Enolase-phosphatase E1.